The sequence spans 342 residues: Dihydroorotase (342 aa).

Zn(2+) is bound by residues His13 and His15. Residues 15 to 17 (HLR) and Asn41 contribute to the substrate site. Lys98, His135, and His173 together coordinate Zn(2+). Lys98 carries the post-translational modification N6-carboxylysine. Position 135 (His135) interacts with substrate. Residue Leu218 coordinates substrate. Asp246 provides a ligand contact to Zn(2+). Asp246 is an active-site residue. Substrate contacts are provided by His250 and Ala262.

This sequence belongs to the metallo-dependent hydrolases superfamily. DHOase family. Class II DHOase subfamily. As to quaternary structure, homodimer. The cofactor is Zn(2+).

The catalysed reaction is (S)-dihydroorotate + H2O = N-carbamoyl-L-aspartate + H(+). The protein operates within pyrimidine metabolism; UMP biosynthesis via de novo pathway; (S)-dihydroorotate from bicarbonate: step 3/3. Functionally, catalyzes the reversible cyclization of carbamoyl aspartate to dihydroorotate. This is Dihydroorotase from Vibrio parahaemolyticus serotype O3:K6 (strain RIMD 2210633).